We begin with the raw amino-acid sequence, 64 residues long: Conotoxin VnMLCL-042 (64 aa).

Positions 1–19 are cleaved as a signal peptide; the sequence is MLCLPVFIILLLLASPAAP. Positions 20–43 are excised as a propeptide; that stretch reads NPLQTRIQSNLIRAGPEDANMKTD. Met-63 carries the post-translational modification Methionine amide.

Belongs to the conotoxin T superfamily. As to expression, expressed by the venom duct.

Its subcellular location is the secreted. The chain is Conotoxin VnMLCL-042 from Conus ventricosus (Mediterranean cone).